The following is a 288-amino-acid chain: ATP synthase gamma chain (288 aa).

Belongs to the ATPase gamma chain family. F-type ATPases have 2 components, CF(1) - the catalytic core - and CF(0) - the membrane proton channel. CF(1) has five subunits: alpha(3), beta(3), gamma(1), delta(1), epsilon(1). CF(0) has three main subunits: a, b and c.

The protein resides in the cell inner membrane. Produces ATP from ADP in the presence of a proton gradient across the membrane. The gamma chain is believed to be important in regulating ATPase activity and the flow of protons through the CF(0) complex. This Vibrio cholerae serotype O1 (strain ATCC 39541 / Classical Ogawa 395 / O395) protein is ATP synthase gamma chain.